The primary structure comprises 444 residues: NADH-dependent flavin oxidoreductase nadA (444 aa).

FMN is bound by residues 37-40 (ERMC) and Gln123. Positions 127-149 (PGRQTPSHRQPEPISASDVPLDT) are disordered. 192–195 (HAAH) contributes to the substrate binding site. 345-346 (AR) is an FMN binding site.

Belongs to the NADH:flavin oxidoreductase/NADH oxidase family.

It is found in the cytoplasm. Its subcellular location is the cytosol. Its function is as follows. NADH-dependent flavin oxidoreductase; part of the gene cluster that mediates the biosynthesis of aflatoxins, a group of polyketide-derived furanocoumarins, and part of the most toxic and carcinogenic compounds among the known mycotoxins. The four major aflatoxins produced by A.parasiticus are aflatoxin B1 (AFB1), aflatoxin B2 (AFB2), aflatoxin G1 (AFG1) and aflatoxin G2 (AFG2). Within the aflatoxin pathway, the NADH-dependent flavin oxidoreductase nadA is specifically required for the last steps in which OMST is converted specifically to aflatoxin G1. The biosynthesis of aflatoxins begins with the norsolorinic acid synthase aflC that combines a hexanoyl starter unit produced by the fatty acid synthase aflA/aflB and 7 malonyl-CoA extender units to synthesize the precursor NOR. The second step is the conversion of NOR to averantin and requires the norsolorinic acid ketoreductase aflD, which catalyzes the dehydration of norsolorinic acid to form (1'S)-averantin. The norsolorinic acid reductases aflE and aflF may also play a role in the conversion of NOR to AVN. The cytochrome P450 monooxygenase aflG then catalyzes the hydroxylation of AVN to 5'hydroxyaverantin (HAVN). The next step is performed by the 5'-hydroxyaverantin dehydrogenase aflH that transforms HAVN to 5'-oxoaverantin (OAVN) which is further converted to averufin (AVF) by aflK that plays a dual role in the pathway, as a 5'-oxoaverantin cyclase that mediates conversion of 5'-oxoaverantin, as well as a versicolorin B synthase in a later step in the pathway. The averufin oxidase aflI catalyzes the conversion of AVF to versiconal hemiacetal acetate (VHA). VHA is then the substrate for the versiconal hemiacetal acetate esterase aflJ to yield versiconal (VAL). Versicolorin B synthase aflK then converts VAL to versicolorin B (VERB) by closing the bisfuran ring of aflatoxin which is required for DNA-binding, thus giving to aflatoxin its activity as a mutagen. Then, the activity of the versicolorin B desaturase aflL leads to versicolorin A (VERA). A branch point starts from VERB since it can also be converted to dihydrodemethylsterigmatocystin (DMDHST), probably also by aflL, VERA being a precursor for aflatoxins B1 and G1, and DMDHST for aflatoxins B2 and G2. Next, the versicolorin reductase aflM and the cytochrome P450 monooxygenase aflN are involved in conversion of VERA to demethylsterigmatocystin (DMST). AflX and aflY seem also involved in this step, through probable aflX-mediated epoxide ring-opening step following versicolorin A oxidation and aflY-mediated Baeyer-Villiger oxidation required for the formation of the xanthone ring. The methyltransferase aflO then leads to the modification of DMST to sterigmatocystin (ST), and of DMDHST to dihydrosterigmatocystin (DHST). Both ST and DHST are then substrates of the O-methyltransferase aflP to yield O-methylsterigmatocystin (OMST) and dihydro-O-methylsterigmatocystin (DHOMST), respectively. Finally OMST is converted to aflatoxins B1 and G1, and DHOMST to aflatoxins B2 and G2, via the action of several enzymes including O-methylsterigmatocystin oxidoreductase aflQ, the cytochrome P450 monooxygenase aflU, but also the NADH-dependent flavin oxidoreductase nadA which is specifically required for the synthesis of AFG1. The chain is NADH-dependent flavin oxidoreductase nadA from Aspergillus parasiticus (strain ATCC 56775 / NRRL 5862 / SRRC 143 / SU-1).